We begin with the raw amino-acid sequence, 637 residues long: Chaperone protein HtpG (637 aa).

An a; substrate-binding region spans residues 1–345 (MTAAQKETLG…SNDLPLNVSR (345 aa)). The segment at 346-562 (EILQDNKVTQ…DNDMSSQMQK (217 aa)) is b. Positions 563-637 (LMESVGQAAP…LNKLMLELSK (75 aa)) are c.

It belongs to the heat shock protein 90 family. As to quaternary structure, homodimer.

The protein localises to the cytoplasm. Functionally, molecular chaperone. Has ATPase activity. This Pseudoalteromonas translucida (strain TAC 125) protein is Chaperone protein HtpG.